A 508-amino-acid polypeptide reads, in one-letter code: Argininosuccinate lyase (508 aa).

Belongs to the lyase 1 family. Argininosuccinate lyase subfamily.

The protein localises to the cytoplasm. It carries out the reaction 2-(N(omega)-L-arginino)succinate = fumarate + L-arginine. Its pathway is amino-acid biosynthesis; L-arginine biosynthesis; L-arginine from L-ornithine and carbamoyl phosphate: step 3/3. This is Argininosuccinate lyase from Methanopyrus kandleri (strain AV19 / DSM 6324 / JCM 9639 / NBRC 100938).